The sequence spans 483 residues: UDP-N-acetylmuramoyl-L-alanyl-D-glutamate--2,6-diaminopimelate ligase (483 aa).

Serine 30 serves as a coordination point for UDP-N-acetyl-alpha-D-muramoyl-L-alanyl-D-glutamate. Residue 109–115 (GTNGKTT) coordinates ATP. UDP-N-acetyl-alpha-D-muramoyl-L-alanyl-D-glutamate is bound by residues 151–152 (TT), serine 178, and arginine 186. Lysine 218 bears the N6-carboxylysine mark. Residues arginine 380, 403–406 (DNPR), glycine 453, and glutamate 457 each bind meso-2,6-diaminopimelate. The Meso-diaminopimelate recognition motif motif lies at 403–406 (DNPR).

It belongs to the MurCDEF family. MurE subfamily. Mg(2+) is required as a cofactor. Post-translationally, carboxylation is probably crucial for Mg(2+) binding and, consequently, for the gamma-phosphate positioning of ATP.

It localises to the cytoplasm. The enzyme catalyses UDP-N-acetyl-alpha-D-muramoyl-L-alanyl-D-glutamate + meso-2,6-diaminopimelate + ATP = UDP-N-acetyl-alpha-D-muramoyl-L-alanyl-gamma-D-glutamyl-meso-2,6-diaminopimelate + ADP + phosphate + H(+). Its pathway is cell wall biogenesis; peptidoglycan biosynthesis. In terms of biological role, catalyzes the addition of meso-diaminopimelic acid to the nucleotide precursor UDP-N-acetylmuramoyl-L-alanyl-D-glutamate (UMAG) in the biosynthesis of bacterial cell-wall peptidoglycan. The protein is UDP-N-acetylmuramoyl-L-alanyl-D-glutamate--2,6-diaminopimelate ligase of Chlamydia trachomatis serovar A (strain ATCC VR-571B / DSM 19440 / HAR-13).